A 493-amino-acid chain; its full sequence is Aspartyl/glutamyl-tRNA(Asn/Gln) amidotransferase subunit B (493 aa).

Residues 268–291 (HYQEADGSTSKGRPKETAEDYRYF) form a disordered region. A compositionally biased stretch (basic and acidic residues) spans 280 to 291 (RPKETAEDYRYF).

It belongs to the GatB/GatE family. GatB subfamily. Heterotrimer of A, B and C subunits.

The enzyme catalyses L-glutamyl-tRNA(Gln) + L-glutamine + ATP + H2O = L-glutaminyl-tRNA(Gln) + L-glutamate + ADP + phosphate + H(+). The catalysed reaction is L-aspartyl-tRNA(Asn) + L-glutamine + ATP + H2O = L-asparaginyl-tRNA(Asn) + L-glutamate + ADP + phosphate + 2 H(+). Its function is as follows. Allows the formation of correctly charged Asn-tRNA(Asn) or Gln-tRNA(Gln) through the transamidation of misacylated Asp-tRNA(Asn) or Glu-tRNA(Gln) in organisms which lack either or both of asparaginyl-tRNA or glutaminyl-tRNA synthetases. The reaction takes place in the presence of glutamine and ATP through an activated phospho-Asp-tRNA(Asn) or phospho-Glu-tRNA(Gln). This is Aspartyl/glutamyl-tRNA(Asn/Gln) amidotransferase subunit B from Corynebacterium glutamicum (strain ATCC 13032 / DSM 20300 / JCM 1318 / BCRC 11384 / CCUG 27702 / LMG 3730 / NBRC 12168 / NCIMB 10025 / NRRL B-2784 / 534).